The chain runs to 313 residues: Protein TIC 22-like, chloroplastic (313 aa).

The N-terminal 96 residues, M1 to R96, are a transit peptide targeting the chloroplast.

This sequence belongs to the Tic22 family.

The protein resides in the plastid. Its subcellular location is the chloroplast intermembrane space. Its function is as follows. Involved in protein precursor import into chloroplasts. In Arabidopsis thaliana (Mouse-ear cress), this protein is Protein TIC 22-like, chloroplastic (TIC22L).